Reading from the N-terminus, the 427-residue chain is Trigger factor (427 aa).

Residues glycine 163–proline 248 enclose the PPIase FKBP-type domain.

Belongs to the FKBP-type PPIase family. Tig subfamily.

Its subcellular location is the cytoplasm. The enzyme catalyses [protein]-peptidylproline (omega=180) = [protein]-peptidylproline (omega=0). In terms of biological role, involved in protein export. Acts as a chaperone by maintaining the newly synthesized protein in an open conformation. Functions as a peptidyl-prolyl cis-trans isomerase. This chain is Trigger factor, found in Listeria welshimeri serovar 6b (strain ATCC 35897 / DSM 20650 / CCUG 15529 / CIP 8149 / NCTC 11857 / SLCC 5334 / V8).